The chain runs to 458 residues: Ribulose bisphosphate carboxylase (458 aa).

Residue Asn-111 participates in substrate binding. Residue Lys-166 is the Proton acceptor of the active site. Lys-168 contributes to the substrate binding site. The Mg(2+) site is built by Lys-191, Asp-193, and Glu-194. The residue at position 191 (Lys-191) is an N6-carboxylysine. His-287 acts as the Proton acceptor in catalysis. Substrate-binding residues include Arg-288, His-321, and Ser-368.

It belongs to the RuBisCO large chain family. Type II subfamily. In terms of assembly, homodimer. Mg(2+) serves as cofactor.

The enzyme catalyses 2 (2R)-3-phosphoglycerate + 2 H(+) = D-ribulose 1,5-bisphosphate + CO2 + H2O. It carries out the reaction D-ribulose 1,5-bisphosphate + O2 = 2-phosphoglycolate + (2R)-3-phosphoglycerate + 2 H(+). In terms of biological role, ruBisCO catalyzes two reactions: the carboxylation of D-ribulose 1,5-bisphosphate, the primary event in carbon dioxide fixation, as well as the oxidative fragmentation of the pentose substrate. Both reactions occur simultaneously and in competition at the same active site. This chain is Ribulose bisphosphate carboxylase (cbbM), found in Rhodobacter capsulatus (strain ATCC BAA-309 / NBRC 16581 / SB1003).